A 57-amino-acid chain; its full sequence is UPF0391 membrane protein RHECIAT_CH0003936 (57 aa).

Transmembrane regions (helical) follow at residues 4 to 24 and 33 to 53; these read WALI…SGVS and VLFG…LMAG.

This sequence belongs to the UPF0391 family.

The protein localises to the cell membrane. This Rhizobium etli (strain CIAT 652) protein is UPF0391 membrane protein RHECIAT_CH0003936.